The primary structure comprises 281 residues: RNA polymerase sigma factor RpoH (281 aa).

The tract at residues 52 to 121 is sigma-70 factor domain-2; the sequence is LILSHLRFVI…IHEYVLRNWR (70 aa). The Interaction with polymerase core subunit RpoC signature appears at 76-79; it reads DLIQ. The segment at 226–277 is sigma-70 factor domain-4; that stretch reads ALQSLDARSQDIIKARWLDDNKATLHDLAAKYNVSAERIRQLETNALKKLKS. The H-T-H motif DNA-binding region spans 250-269; it reads LHDLAAKYNVSAERIRQLET.

It belongs to the sigma-70 factor family. RpoH subfamily. As to quaternary structure, interacts with the RNA polymerase core enzyme.

It localises to the cytoplasm. Functionally, sigma factors are initiation factors that promote the attachment of RNA polymerase to specific initiation sites and are then released. This sigma factor is involved in regulation of expression of heat shock genes. In Haemophilus influenzae (strain ATCC 51907 / DSM 11121 / KW20 / Rd), this protein is RNA polymerase sigma factor RpoH.